The sequence spans 557 residues: Urocanate hydratase (557 aa).

The tract at residues 1 to 20 is disordered; it reads MSNPRHNEREVRSPRGDELN. NAD(+) is bound by residues 52–53, Gln-130, 176–178, Glu-196, Arg-201, 242–243, 263–267, 273–274, and Tyr-322; these read GG, GMG, NA, QTSAH, and YL. Cys-410 is a catalytic residue. Gly-492 is an NAD(+) binding site.

This sequence belongs to the urocanase family. NAD(+) is required as a cofactor.

Its subcellular location is the cytoplasm. It carries out the reaction 4-imidazolone-5-propanoate = trans-urocanate + H2O. It functions in the pathway amino-acid degradation; L-histidine degradation into L-glutamate; N-formimidoyl-L-glutamate from L-histidine: step 2/3. In terms of biological role, catalyzes the conversion of urocanate to 4-imidazolone-5-propionate. This Brucella canis (strain ATCC 23365 / NCTC 10854 / RM-666) protein is Urocanate hydratase.